Consider the following 502-residue polypeptide: ATP synthase subunit alpha (502 aa).

169–176 serves as a coordination point for ATP; the sequence is GDRQTGKT.

The protein belongs to the ATPase alpha/beta chains family. In terms of assembly, F-type ATPases have 2 components, CF(1) - the catalytic core - and CF(0) - the membrane proton channel. CF(1) has five subunits: alpha(3), beta(3), gamma(1), delta(1), epsilon(1). CF(0) has three main subunits: a(1), b(2) and c(9-12). The alpha and beta chains form an alternating ring which encloses part of the gamma chain. CF(1) is attached to CF(0) by a central stalk formed by the gamma and epsilon chains, while a peripheral stalk is formed by the delta and b chains.

It localises to the cell inner membrane. The catalysed reaction is ATP + H2O + 4 H(+)(in) = ADP + phosphate + 5 H(+)(out). Its function is as follows. Produces ATP from ADP in the presence of a proton gradient across the membrane. The alpha chain is a regulatory subunit. In Desulfovibrio desulfuricans (strain ATCC 27774 / DSM 6949 / MB), this protein is ATP synthase subunit alpha.